Here is a 181-residue protein sequence, read N- to C-terminus: Protein Syd (181 aa).

It belongs to the Syd family.

It is found in the cell inner membrane. Interacts with the SecY protein in vivo. May bind preferentially to an uncomplexed state of SecY, thus functioning either as a chelating agent for excess SecY in the cell or as a regulatory factor that negatively controls the translocase function. This chain is Protein Syd, found in Shigella flexneri.